The sequence spans 343 residues: N-acetyl-gamma-glutamyl-phosphate reductase (343 aa).

The active site involves Cys-147.

Belongs to the NAGSA dehydrogenase family. Type 1 subfamily.

The protein resides in the cytoplasm. The enzyme catalyses N-acetyl-L-glutamate 5-semialdehyde + phosphate + NADP(+) = N-acetyl-L-glutamyl 5-phosphate + NADPH + H(+). The protein operates within amino-acid biosynthesis; L-arginine biosynthesis; N(2)-acetyl-L-ornithine from L-glutamate: step 3/4. Catalyzes the NADPH-dependent reduction of N-acetyl-5-glutamyl phosphate to yield N-acetyl-L-glutamate 5-semialdehyde. This Listeria innocua serovar 6a (strain ATCC BAA-680 / CLIP 11262) protein is N-acetyl-gamma-glutamyl-phosphate reductase.